The sequence spans 411 residues: MGTLRAILKNPDDLYPLIKLKLAARHAEKQIPPEPHWGFCYLMLQKVSRSFALVIQQLPVELRDAVCIFYLVLRALDTVEDDTSIPTDVKVPILISFHQHVYDREWHFACGTKEYKVLMDQFHHVSTAFLELGKLYQQAIEDITMRMGAGMAKFICKEVETTDDYDEYCHYVAGLVGLGLSKLFHASGKEDLASDSLSNSMGLFLQKTNIIRDYLEDINEVPKCRMFWPREIWSKYVNKLEDLKYEENSVKAVQCLNDMVTNALSHVEDCLTYMFNLHDPAIFRFCAIPQVMAIGTLAMCYDNIEVFRGVVKMRRGLTAKVIDRTKTMADVYGAFFDFSCMLKSKVNNNDPNATKTLKRLDAILKTCRDSGTLNKRKSYIIRNEPNYSPVLIVVIFIILAIILAQLFGSRS.

Arg49 and Arg74 together coordinate NADP(+). 3 residues coordinate Mg(2+): Asp77, Glu80, and Asp81. NADP(+) contacts are provided by Arg212, Lys312, and Arg314. Residues 388-408 (SPVLIVVIFIILAIILAQLFG) form a helical membrane-spanning segment.

It belongs to the phytoene/squalene synthase family. It depends on Mg(2+) as a cofactor.

It localises to the membrane. It carries out the reaction 2 (2E,6E)-farnesyl diphosphate + NADH + H(+) = squalene + 2 diphosphate + NAD(+). The catalysed reaction is 2 (2E,6E)-farnesyl diphosphate + NADPH + H(+) = squalene + 2 diphosphate + NADP(+). Converts farnesyl diphosphate (FPP) into squalene, a precursor for sterol biosynthesis in eukaryotes. The sequence is that of Squalene synthase from Solanum lycopersicum (Tomato).